A 526-amino-acid chain; its full sequence is Rho guanine nucleotide exchange factor 3 (526 aa).

A disordered region spans residues glutamate 20–lysine 40. 2 positions are modified to phosphoserine: serine 47 and serine 70. Residues lysine 122–lysine 304 enclose the DH domain. One can recognise a PH domain in the interval isoleucine 291–glutamate 449. Disordered regions lie at residues glutamate 464–valine 502 and glutamate 507–valine 526. A compositionally biased stretch (polar residues) spans serine 466–arginine 475.

As to quaternary structure, interacts with RHOA and RHOB.

The protein localises to the cytoplasm. In terms of biological role, acts as a guanine nucleotide exchange factor (GEF) for RhoA and RhoB GTPases. In Macaca fascicularis (Crab-eating macaque), this protein is Rho guanine nucleotide exchange factor 3 (ARHGEF3).